The following is a 105-amino-acid chain: Late embryogenesis abundant protein Lea5-D (105 aa).

A disordered region spans residues 48–67 (KVERRDAMKESSSSETRAYS). Residues 57 to 67 (ESSSSETRAYS) show a composition bias toward low complexity.

The protein belongs to the LEA type 3 family.

The sequence is that of Late embryogenesis abundant protein Lea5-D (LEA5-D) from Gossypium hirsutum (Upland cotton).